Consider the following 365-residue polypeptide: Eukaryotic translation initiation factor 3 subunit H (365 aa).

The 150-residue stretch at 11–160 (VQVEALVVMK…LRAFRLSPQF (150 aa)) folds into the MPN domain. The stretch at 273–303 (YQRSLAREQTKIAAWQAKRKAENATRAQLKQ) forms a coiled coil.

The protein belongs to the eIF-3 subunit H family. In terms of assembly, component of the eukaryotic translation initiation factor 3 (eIF-3) complex.

Its subcellular location is the cytoplasm. In terms of biological role, component of the eukaryotic translation initiation factor 3 (eIF-3) complex, which is involved in protein synthesis of a specialized repertoire of mRNAs and, together with other initiation factors, stimulates binding of mRNA and methionyl-tRNAi to the 40S ribosome. The eIF-3 complex specifically targets and initiates translation of a subset of mRNAs involved in cell proliferation. This Coccidioides immitis (strain RS) (Valley fever fungus) protein is Eukaryotic translation initiation factor 3 subunit H.